Consider the following 173-residue polypeptide: Translation initiation factor IF-3 (173 aa).

The protein belongs to the IF-3 family. In terms of assembly, monomer.

The protein resides in the cytoplasm. Functionally, IF-3 binds to the 30S ribosomal subunit and shifts the equilibrium between 70S ribosomes and their 50S and 30S subunits in favor of the free subunits, thus enhancing the availability of 30S subunits on which protein synthesis initiation begins. This chain is Translation initiation factor IF-3, found in Caulobacter sp. (strain K31).